The following is a 496-amino-acid chain: Glycerol kinase (496 aa).

T12 lines the ADP pocket. Residues T12, T13, and S14 each coordinate ATP. A sn-glycerol 3-phosphate-binding site is contributed by T12. Position 16 (R16) interacts with ADP. Sn-glycerol 3-phosphate-binding residues include R82, E83, and Y134. Glycerol contacts are provided by R82, E83, and Y134. A Phosphohistidine; by HPr modification is found at H230. D244 contacts sn-glycerol 3-phosphate. Positions 244 and 245 each coordinate glycerol. ADP-binding residues include T266 and G309. ATP contacts are provided by T266, G309, Q313, and G410. ADP-binding residues include G410 and N414.

The protein belongs to the FGGY kinase family. In terms of assembly, homotetramer and homodimer (in equilibrium). The phosphoenolpyruvate-dependent sugar phosphotransferase system (PTS), including enzyme I, and histidine-containing protein (HPr) are required for the phosphorylation, which leads to the activation of the enzyme.

The enzyme catalyses glycerol + ATP = sn-glycerol 3-phosphate + ADP + H(+). The protein operates within polyol metabolism; glycerol degradation via glycerol kinase pathway; sn-glycerol 3-phosphate from glycerol: step 1/1. Activated by phosphorylation and inhibited by fructose 1,6-bisphosphate (FBP). In terms of biological role, key enzyme in the regulation of glycerol uptake and metabolism. Catalyzes the phosphorylation of glycerol to yield sn-glycerol 3-phosphate. This chain is Glycerol kinase, found in Bacillus cereus (strain ATCC 14579 / DSM 31 / CCUG 7414 / JCM 2152 / NBRC 15305 / NCIMB 9373 / NCTC 2599 / NRRL B-3711).